The chain runs to 139 residues: Putative nickel-responsive regulator (139 aa).

Ni(2+) contacts are provided by His-79, His-90, His-92, and Cys-98.

It belongs to the transcriptional regulatory CopG/NikR family. Requires Ni(2+) as cofactor.

Its function is as follows. Transcriptional regulator. The chain is Putative nickel-responsive regulator from Anaeromyxobacter dehalogenans (strain 2CP-C).